The chain runs to 488 residues: MSYPGYPPTGYPPFPGYPPAGQESSFPPSGQYPYPSGFPPMGGGAYPQVPSSGYPGAGGYPAPGGYPAPGGYPGAPQPGGAPSYPGVPPGQGFGVPPGGAGFSGYPQPPSQSYGGGPAQVPLPGGFPGGQMPSQYPGGQPTYPSQINTDSFSSYPVFSPVSLDYSSEPATVTQVTQGTIRPAANFDAIRDAEILRKAMKGFGTDEQAIVDVVANRSNDQRQKIKAAFKTSYGKDLIKDLKSELSGNMEELILALFMPPTYYDAWSLRKAMQGAGTQERVLIEILCTRTNQEIREIVRCYQSEFGRDLEKDIRSDTSGHFERLLVSMCQGNRDENQSINHQMAQEDAQRLYQAGEGRLGTDESCFNMILATRSFPQLRATMEAYSRMANRDLLSSVSREFSGYVESGLKTILQCALNRPAFFAERLYYAMKGAGTDDSTLVRIVVTRSEIDLVQIKQMFAQMYQKTLGTMIAGDTSGDYRRLLLAIVGQ.

Residues 1-18 (MSYPGYPPTGYPPFPGYP) show a composition bias toward pro residues. Disordered stretches follow at residues 1–49 (MSYP…YPQV) and 71–143 (GYPG…PTYP). The tract at residues 1 to 143 (MSYPGYPPTG…QYPGGQPTYP (143 aa)) is repeat-rich region. Residues 5–20 (GYPPTGYPPFPGYPPA) are 3 X 5 AA tandem repeats of G-Y-P-P-X. The span at 89-102 (PGQGFGVPPGGAGF) shows a compositional bias: gly residues. 4 Annexin repeats span residues 185–256 (FDAI…ALFM), 257–328 (PPTY…SMCQ), 340–412 (QMAQ…TILQ), and 416–487 (NRPA…AIVG). Residue lysine 233 is modified to N6-acetyllysine.

This sequence belongs to the annexin family. In terms of assembly, interacts with PDCD6. In terms of tissue distribution, isoform 1 is expressed in brain, heart and skeletal muscle. Isoform 2 is more abundant in liver, lung, kidney, spleen, fibroblasts and placenta.

Functionally, calcium/phospholipid-binding protein which promotes membrane fusion and is involved in exocytosis. This is Annexin A7 (ANXA7) from Homo sapiens (Human).